A 129-amino-acid chain; its full sequence is Lysozyme C-2 (129 aa).

One can recognise a C-type lysozyme domain in the interval 1 to 129; sequence KVFERCELAR…VSSYVEGCTL (129 aa). 4 disulfides stabilise this stretch: cysteine 6/cysteine 127, cysteine 30/cysteine 115, cysteine 65/cysteine 81, and cysteine 77/cysteine 95. Residues glutamate 35 and aspartate 53 contribute to the active site.

Belongs to the glycosyl hydrolase 22 family. As to quaternary structure, monomer.

The catalysed reaction is Hydrolysis of (1-&gt;4)-beta-linkages between N-acetylmuramic acid and N-acetyl-D-glucosamine residues in a peptidoglycan and between N-acetyl-D-glucosamine residues in chitodextrins.. In terms of biological role, lysozymes have primarily a bacteriolytic function; those in tissues and body fluids are associated with the monocyte-macrophage system and enhance the activity of immunoagents. In Capra hircus (Goat), this protein is Lysozyme C-2.